The sequence spans 223 residues: Phosphoribosylformylglycinamidine synthase subunit PurQ (223 aa).

One can recognise a Glutamine amidotransferase type-1 domain in the interval 3-223 (FAVLVFPGSN…MVKSWREQHV (221 aa)). The active-site Nucleophile is the Cys85. Residues His193 and Glu195 contribute to the active site.

Part of the FGAM synthase complex composed of 1 PurL, 1 PurQ and 2 PurS subunits.

The protein localises to the cytoplasm. The catalysed reaction is N(2)-formyl-N(1)-(5-phospho-beta-D-ribosyl)glycinamide + L-glutamine + ATP + H2O = 2-formamido-N(1)-(5-O-phospho-beta-D-ribosyl)acetamidine + L-glutamate + ADP + phosphate + H(+). It carries out the reaction L-glutamine + H2O = L-glutamate + NH4(+). It functions in the pathway purine metabolism; IMP biosynthesis via de novo pathway; 5-amino-1-(5-phospho-D-ribosyl)imidazole from N(2)-formyl-N(1)-(5-phospho-D-ribosyl)glycinamide: step 1/2. In terms of biological role, part of the phosphoribosylformylglycinamidine synthase complex involved in the purines biosynthetic pathway. Catalyzes the ATP-dependent conversion of formylglycinamide ribonucleotide (FGAR) and glutamine to yield formylglycinamidine ribonucleotide (FGAM) and glutamate. The FGAM synthase complex is composed of three subunits. PurQ produces an ammonia molecule by converting glutamine to glutamate. PurL transfers the ammonia molecule to FGAR to form FGAM in an ATP-dependent manner. PurS interacts with PurQ and PurL and is thought to assist in the transfer of the ammonia molecule from PurQ to PurL. In Staphylococcus aureus (strain MSSA476), this protein is Phosphoribosylformylglycinamidine synthase subunit PurQ.